Reading from the N-terminus, the 210-residue chain is Large ribosomal subunit protein uL3 (210 aa).

Residues 131–140 are compositionally biased toward polar residues; that stretch reads NRASHGNSLS. The tract at residues 131-150 is disordered; it reads NRASHGNSLSHRAPGSIGCR. Residue Gln151 is modified to N5-methylglutamine.

It belongs to the universal ribosomal protein uL3 family. As to quaternary structure, part of the 50S ribosomal subunit. Forms a cluster with proteins L14 and L19. In terms of processing, methylated by PrmB.

One of the primary rRNA binding proteins, it binds directly near the 3'-end of the 23S rRNA, where it nucleates assembly of the 50S subunit. The sequence is that of Large ribosomal subunit protein uL3 from Acidithiobacillus ferrooxidans (strain ATCC 23270 / DSM 14882 / CIP 104768 / NCIMB 8455) (Ferrobacillus ferrooxidans (strain ATCC 23270)).